Reading from the N-terminus, the 254-residue chain is 2-dehydro-3-deoxy-D-gluconate 5-dehydrogenase (254 aa).

16–40 (LVTGPGTGIGQGIAKALAGAGADII) serves as a coordination point for NAD(+). Ser-146 provides a ligand contact to substrate. The active-site Proton acceptor is the Tyr-159.

Belongs to the short-chain dehydrogenases/reductases (SDR) family.

The catalysed reaction is 2-dehydro-3-deoxy-D-gluconate + NAD(+) = 3-deoxy-D-glycero-2,5-hexodiulosonate + NADH + H(+). Its pathway is glycan metabolism; pectin degradation; 2-dehydro-3-deoxy-D-gluconate from pectin: step 5/5. Its function is as follows. Catalyzes the reduction of 2,5-diketo-3-deoxygluconate (DKII or 4,6-dihydroxy-2,5-dioxohexanoate) into 2-keto-3-deoxygluconate (KDG or 2-dehydro-3-deoxygluconate) with a concomitant oxidation of NADH. This chain is 2-dehydro-3-deoxy-D-gluconate 5-dehydrogenase (kduD), found in Bacillus subtilis (strain 168).